The sequence spans 145 residues: MKGNYLVIDKRVLPDVYEKVVFAQKLLKDGKVKEITEATKIAGISRSVYYKYKDYIFDFAETSQGKKVTFNLIVKDQTGVLSGIINYISEQGGNILTINQGIPLNGVANISVTIDMSTLIGDIKTLLNGLSDIQYVEKIEFVAME.

The region spanning 69–144 is the ACT domain; it reads TFNLIVKDQT…YVEKIEFVAM (76 aa).

The protein belongs to the UPF0735 family.

The protein is UPF0735 ACT domain-containing protein CLL_A2896 of Clostridium botulinum (strain Eklund 17B / Type B).